Reading from the N-terminus, the 251-residue chain is Zinc import ATP-binding protein ZnuC (251 aa).

The ABC transporter domain maps to 5-220; sequence VSLENVSVSF…PEFISMFGPR (216 aa). 37–44 contacts ATP; the sequence is GPNGAGKS.

The protein belongs to the ABC transporter superfamily. Zinc importer (TC 3.A.1.15.5) family. As to quaternary structure, the complex is composed of two ATP-binding proteins (ZnuC), two transmembrane proteins (ZnuB) and a solute-binding protein (ZnuA).

The protein resides in the cell inner membrane. It catalyses the reaction Zn(2+)(out) + ATP(in) + H2O(in) = Zn(2+)(in) + ADP(in) + phosphate(in) + H(+)(in). In terms of biological role, part of the ABC transporter complex ZnuABC involved in zinc import. Responsible for energy coupling to the transport system. The protein is Zinc import ATP-binding protein ZnuC of Salmonella choleraesuis (strain SC-B67).